The chain runs to 742 residues: Phosphoribosylformylglycinamidine synthase subunit PurL (742 aa).

H53 is an active-site residue. ATP is bound by residues Y56 and K95. A Mg(2+)-binding site is contributed by E97. Substrate contacts are provided by residues 98–101 (SHNH) and R120. H99 serves as the catalytic Proton acceptor. D121 is a binding site for Mg(2+). Substrate is bound at residue Q245. D275 contacts Mg(2+). Substrate is bound at residue 319-321 (ESQ). 2 residues coordinate ATP: D502 and G539. A Mg(2+)-binding site is contributed by N540. Position 542 (S542) interacts with substrate.

It belongs to the FGAMS family. Monomer. Part of the FGAM synthase complex composed of 1 PurL, 1 PurQ and 2 PurS subunits.

The protein localises to the cytoplasm. The enzyme catalyses N(2)-formyl-N(1)-(5-phospho-beta-D-ribosyl)glycinamide + L-glutamine + ATP + H2O = 2-formamido-N(1)-(5-O-phospho-beta-D-ribosyl)acetamidine + L-glutamate + ADP + phosphate + H(+). It participates in purine metabolism; IMP biosynthesis via de novo pathway; 5-amino-1-(5-phospho-D-ribosyl)imidazole from N(2)-formyl-N(1)-(5-phospho-D-ribosyl)glycinamide: step 1/2. In terms of biological role, part of the phosphoribosylformylglycinamidine synthase complex involved in the purines biosynthetic pathway. Catalyzes the ATP-dependent conversion of formylglycinamide ribonucleotide (FGAR) and glutamine to yield formylglycinamidine ribonucleotide (FGAM) and glutamate. The FGAM synthase complex is composed of three subunits. PurQ produces an ammonia molecule by converting glutamine to glutamate. PurL transfers the ammonia molecule to FGAR to form FGAM in an ATP-dependent manner. PurS interacts with PurQ and PurL and is thought to assist in the transfer of the ammonia molecule from PurQ to PurL. The chain is Phosphoribosylformylglycinamidine synthase subunit PurL from Lactobacillus acidophilus (strain ATCC 700396 / NCK56 / N2 / NCFM).